The primary structure comprises 254 residues: D-aminoacyl-tRNA deacylase (254 aa).

Residues 61 to 85 (KPTLTVHTPGNLTEDNSRGGNSEEI) form a disordered region. A compositionally biased stretch (polar residues) spans 65–84 (TVHTPGNLTEDNSRGGNSEE).

This sequence belongs to the DtdA deacylase family. In terms of assembly, monomer. Zn(2+) serves as cofactor.

The enzyme catalyses a D-aminoacyl-tRNA + H2O = a tRNA + a D-alpha-amino acid + H(+). It catalyses the reaction glycyl-tRNA(Ala) + H2O = tRNA(Ala) + glycine + H(+). In terms of biological role, D-aminoacyl-tRNA deacylase with broad substrate specificity. By recycling D-aminoacyl-tRNA to D-amino acids and free tRNA molecules, this enzyme counteracts the toxicity associated with the formation of D-aminoacyl-tRNA entities in vivo. The chain is D-aminoacyl-tRNA deacylase from Methanococcus maripaludis (strain C5 / ATCC BAA-1333).